The following is a 371-amino-acid chain: Barbiturase 1 (371 aa).

The tract at residues 1–103 (MPDAIEVRKV…TIFATVPPED (103 aa)) is RU A. Substrate contacts are provided by residues R53 and 82-83 (SG). The tract at residues 115–250 (RLTVGFAMSE…AQVVVVGNAP (136 aa)) is RU B. K165 is an active-site residue. Residues N197 and 233 to 234 (SS) contribute to the substrate site. The active-site Nucleophile is S233. The tract at residues 256–371 (YRIGHSVMKD…GPVAAIVDLG (116 aa)) is RU C. E304 is a Mg(2+) binding site. Residues K331 and 350 to 351 (SV) contribute to the substrate site. Positions 353, 356, 357, 358, and 361 each coordinate Mg(2+).

It belongs to the cyclic amide hydrolase (CyAH) family. In terms of assembly, homotetramer.

The enzyme catalyses barbiturate + H2O = 3-oxo-3-ureidopropanoate. The protein operates within pyrimidine metabolism; uracil degradation via oxidative pathway; malonate and urea from uracil: step 2/3. Inhibited by cyanuric acid. In terms of biological role, responsible for the hydrolysis of barbituric acid (2,4,6-trihydroxy-1,3-pyrimidine), an intermediate in the oxidative catabolism of pyrimidines. Catalyzes the hydrolytic opening of the pyrimidine ring of barbituric acid to yield ureidomalonic acid. This chain is Barbiturase 1, found in Nocardioides sp. (strain ATCC BAA-499 / JS614).